The chain runs to 107 residues: Alpha-elapitoxin-Al2a (107 aa).

Positions 1–21 (MKTLLLTLVVVTIVCLDLGDS) are cleaved as a signal peptide. 5 disulfide bridges follow: cysteine 24–cysteine 41, cysteine 34–cysteine 62, cysteine 47–cysteine 51, cysteine 66–cysteine 77, and cysteine 78–cysteine 83.

Belongs to the three-finger toxin family. Long-chain subfamily. Type II alpha-neurotoxin sub-subfamily. In terms of tissue distribution, expressed by the venom gland.

Its subcellular location is the secreted. Its function is as follows. Binds with high affinity to muscular (alpha-1/CHRNA1) and neuronal (alpha-7/CHRNA7) nicotinic acetylcholine receptor (nAChR) and inhibits acetylcholine from binding to the receptor, thereby impairing neuromuscular and neuronal transmission. This Austrelaps labialis (Pygmy copperhead) protein is Alpha-elapitoxin-Al2a.